Here is a 377-residue protein sequence, read N- to C-terminus: Gap junction gamma-1 protein (377 aa).

Over 1–18 (MSWSFLTRLLEEINNHST) the chain is Cytoplasmic. The helical transmembrane segment at 19–39 (FVGKVWLTVLIIFRIVLTAVG) threads the bilayer. Over 40–75 (GESIYYDEQSKFTCNTQQPGCENVCYDAFAPLSHVR) the chain is Extracellular. A helical transmembrane segment spans residues 76–96 (FWVFQIILITTPSIMYLGFAM). Residues 97 to 174 (HRIARQPEMQ…RRIKQDGLMK (78 aa)) are Cytoplasmic-facing. Residues 129–163 (DYEEAEDNQEEDPMICEEEEPEKDSEKGDKKKHDG) form a disordered region. Over residues 131-151 (EEAEDNQEEDPMICEEEEPEK) the composition is skewed to acidic residues. A helical membrane pass occupies residues 175–197 (VYVLQLLFRSVFEVGFLMGQYIL). Residues 198–228 (YGFEVIPFFVCSRKPCPHTVDCFVSRPTEKT) are Extracellular-facing. A helical membrane pass occupies residues 229–249 (IFLLIMYAVSALCLFLNLCEL). At 250–377 (FHLGIGGIRD…GVGNREKSGL (128 aa)) the chain is on the cytoplasmic side. 2 disordered regions span residues 265 to 294 (KKELQESRKKTPSAPPNYHSVLKKGRLPNG) and 334 to 377 (LNPT…KSGL). Positions 337-362 (TGDNTHASRSSSPESNSIAAEQNRLN) are enriched in polar residues.

It belongs to the connexin family. Gamma-type subfamily. In terms of assembly, a connexon is composed of a hexamer of connexins.

The protein localises to the cell membrane. It is found in the cell junction. Its subcellular location is the gap junction. In terms of biological role, one gap junction consists of a cluster of closely packed pairs of transmembrane channels, the connexons, through which materials of low MW diffuse from one cell to a neighboring cell. This chain is Gap junction gamma-1 protein (gjc1), found in Xenopus tropicalis (Western clawed frog).